The primary structure comprises 205 residues: Small ribosomal subunit protein uS4 (205 aa).

Residues 1-16 (MSKRESSKYKIDRRMG) show a composition bias toward basic and acidic residues. The tract at residues 1–46 (MSKRESSKYKIDRRMGENIWGRPKSPVNRREYGPGQHGQRRKSKLS) is disordered. In terms of domain architecture, S4 RNA-binding spans 94 to 157 (SRLDAIVYRA…KQLVTVLEAV (64 aa)).

The protein belongs to the universal ribosomal protein uS4 family. In terms of assembly, part of the 30S ribosomal subunit. Contacts protein S5. The interaction surface between S4 and S5 is involved in control of translational fidelity.

Functionally, one of the primary rRNA binding proteins, it binds directly to 16S rRNA where it nucleates assembly of the body of the 30S subunit. Its function is as follows. With S5 and S12 plays an important role in translational accuracy. In Sinorhizobium medicae (strain WSM419) (Ensifer medicae), this protein is Small ribosomal subunit protein uS4.